Here is a 188-residue protein sequence, read N- to C-terminus: MTQGIPAVFLDRDGTINIDHGYVHEIDDFQFIDGVIEAMIELKKMGYALVLVTNQSGIARGIFDEEQFLQLTEWMDWSLADRGVDLDGIYYCPHHPDATEEQYKKSCDCRKPQPGMLLDAQRELSIDMTASFMIGDKLEDMQAATLAKIGTKVLVRTGKPVNTEAEQAANLIINSLADLPKAIKGIKK.

Zn(2+) contacts are provided by Cys-92, His-94, Cys-107, and Cys-109.

This sequence belongs to the GmhB family.

It is found in the cytoplasm. The enzyme catalyses D-glycero-beta-D-manno-heptose 1,7-bisphosphate + H2O = D-glycero-beta-D-manno-heptose 1-phosphate + phosphate. It participates in nucleotide-sugar biosynthesis; ADP-L-glycero-beta-D-manno-heptose biosynthesis; ADP-L-glycero-beta-D-manno-heptose from D-glycero-beta-D-manno-heptose 7-phosphate: step 2/4. Its pathway is bacterial outer membrane biogenesis; LPS core biosynthesis. In terms of biological role, converts the D-glycero-beta-D-manno-heptose 1,7-bisphosphate intermediate into D-glycero-beta-D-manno-heptose 1-phosphate by removing the phosphate group at the C-7 position. The polypeptide is D-glycero-beta-D-manno-heptose-1,7-bisphosphate 7-phosphatase (gmhB1) (Photorhabdus laumondii subsp. laumondii (strain DSM 15139 / CIP 105565 / TT01) (Photorhabdus luminescens subsp. laumondii)).